The chain runs to 274 residues: NADPH-dependent 7-cyano-7-deazaguanine reductase (274 aa).

V80–S82 is a substrate binding site. S82 to K83 is a binding site for NADPH. C181 functions as the Thioimide intermediate in the catalytic mechanism. The active-site Proton donor is the D188. Residue H220–E221 coordinates substrate. R249–G250 contacts NADPH.

Belongs to the GTP cyclohydrolase I family. QueF type 2 subfamily. As to quaternary structure, homodimer.

Its subcellular location is the cytoplasm. The enzyme catalyses 7-aminomethyl-7-carbaguanine + 2 NADP(+) = 7-cyano-7-deazaguanine + 2 NADPH + 3 H(+). Its pathway is tRNA modification; tRNA-queuosine biosynthesis. Functionally, catalyzes the NADPH-dependent reduction of 7-cyano-7-deazaguanine (preQ0) to 7-aminomethyl-7-deazaguanine (preQ1). This is NADPH-dependent 7-cyano-7-deazaguanine reductase from Burkholderia vietnamiensis (strain G4 / LMG 22486) (Burkholderia cepacia (strain R1808)).